The sequence spans 102 residues: Protein CASC2, isoform 3 (102 aa).

Expressed in normal and neoplastic endometrial tissues.

Its function is as follows. May act as a potential tumor suppressor. In Homo sapiens (Human), this protein is Protein CASC2, isoform 3 (CASC2).